Reading from the N-terminus, the 432-residue chain is Adenosylhomocysteinase (432 aa).

Ser2 is modified (N-acetylserine). Positions 57, 131, and 156 each coordinate substrate. 157–159 lines the NAD(+) pocket; sequence TTT. Ser183 carries the post-translational modification Phosphoserine. 2 residues coordinate substrate: Lys186 and Asp190. Lys186 carries the post-translational modification N6-(2-hydroxyisobutyryl)lysine. At Tyr193 the chain carries Phosphotyrosine. Residues 222 to 227, Glu243, Asn248, 299 to 301, Asn346, and His353 contribute to the NAD(+) site; these read GDVGKG and IGH.

This sequence belongs to the adenosylhomocysteinase family. As to quaternary structure, homotetramer. Interaction with AHCYL1. NAD(+) is required as a cofactor.

The protein localises to the cytoplasm. It localises to the melanosome. Its subcellular location is the nucleus. It is found in the endoplasmic reticulum. It carries out the reaction S-adenosyl-L-homocysteine + H2O = L-homocysteine + adenosine. The protein operates within amino-acid biosynthesis; L-homocysteine biosynthesis; L-homocysteine from S-adenosyl-L-homocysteine: step 1/1. Catalyzes the hydrolysis of S-adenosyl-L-homocysteine to form adenosine and homocysteine. Binds copper ions. The polypeptide is Adenosylhomocysteinase (AHCY) (Homo sapiens (Human)).